The sequence spans 97 residues: DNA-directed RNA polymerase subunit omega (97 aa).

It belongs to the RNA polymerase subunit omega family. As to quaternary structure, the RNAP catalytic core consists of 2 alpha, 1 beta, 1 beta' and 1 omega subunit. When a sigma factor is associated with the core the holoenzyme is formed, which can initiate transcription.

It catalyses the reaction RNA(n) + a ribonucleoside 5'-triphosphate = RNA(n+1) + diphosphate. Promotes RNA polymerase assembly. Latches the N- and C-terminal regions of the beta' subunit thereby facilitating its interaction with the beta and alpha subunits. This is DNA-directed RNA polymerase subunit omega from Corynebacterium glutamicum (strain ATCC 13032 / DSM 20300 / JCM 1318 / BCRC 11384 / CCUG 27702 / LMG 3730 / NBRC 12168 / NCIMB 10025 / NRRL B-2784 / 534).